We begin with the raw amino-acid sequence, 382 residues long: MEAIAQEIQKLHANTDEAGRGKINHDLSVLLASFDTDWEKILKLAAGPLRLALVKVGVDQGIFHALNERSHTLPELIEKTGVAPYLLERILRGQASFGMIKEEGAKGFAANRFTTLLAGPNTSGAVTYIFDILRPIASAIPGFLSERNNPAITSTHDTVFQRAFNTELGGFEWMTGHPEHYGNLFQFLALRPNCEWVDAFPIEAEIGSFTNDPHVEKVLLVDVGGGTGAQSVAFRKKLPHVKGRVIVQEIAETLIHVGAKAPAGIEFMEYDCFTPQPIRGAKFYYLRYVMHLWQDERCVEALKVIITAMGPESRLIIDEAVIPDRDVPWQAACQSILMTAALAGAERTLTEWHNLLDAAGLKILNIFPYDLNMQSVIIAVPK.

Residues Glu-249 and Arg-287 each contribute to the S-adenosyl-L-methionine site. The active-site Proton acceptor is the His-291.

The protein belongs to the class I-like SAM-binding methyltransferase superfamily. Cation-independent O-methyltransferase family.

The enzyme catalyses 3-desmethyl okaramine B + S-adenosyl-L-methionine = okaramine B + S-adenosyl-L-homocysteine + H(+). It functions in the pathway alkaloid biosynthesis. Its function is as follows. O-methyltransferase; part of the gene cluster that mediates the biosynthesis of okaramine B, a prenylated indole alkaloid that possesses an unusual octacyclic ring system, including a four-membered azetidine ring and an eight-membered azocine ring, and that exhibits insecticidal activity against silkworm larvae. Within the pathway, okaF catalyzes the last step which is the methylation of 3-desmethyl okaramine B to produce okaramine B. With okaG, OkaF is also able to produce okaramine D from okaramine E. The biosynthesis begins with the NRPS okaA that condenses two tryptophan molecules into cyclo(L-Trp-L-Trp). Prenylation by the prenyltransferase okaC then leads to the formation of cyclo(N8-(alpha,alpha-dimethylallyl)-L-Trp-6a-(alpha,alpha-dime-thylallyl)-L-Trp). This is followed by indole 2,3-epoxidation by the FAD-dependent monooxygenase okaB to facilitate the formation of the hexahydropyrrolo[2,3-b]indole (HPI) moiety of okaramine C. The cytochrome P450 monooxygenase okaD then likely catalyzes formation of the eight-membered ring of okaramine A. The dioxygenase okaE further forms the unusual 2-dimethyl-3-methyl-azetidine ring to yield 12-deshydroxyl okaramine E, as well as the hydroxylation of 12-deshydroxyl okaramine E to produce okaramine E. The cytochrome P450 monoxygenase okaG converts 12-deshydroxyl okaramine E into 3-desmethyl okaramine B which is further methylated by the methyltransferase okaF into okaramine B. In a shunt pathway, okaG and okaF together are also able to convert okaramine E into okaramine D. Okaramine H is produced by nonenzymatic conversion from okaramine A. This is O-methyltransferase okaF from Penicillium ochrochloron.